An 800-amino-acid polypeptide reads, in one-letter code: Ribosome-releasing factor 2, mitochondrial (800 aa).

Positions 21–307 constitute a tr-type G domain; it reads SKVRNIGIIA…AIANYLPSPS (287 aa). GTP is bound by residues 30–37, 95–99, and 147–150; these read AHIDAGKT, DTPGH, and NKMD.

The protein belongs to the TRAFAC class translation factor GTPase superfamily. Classic translation factor GTPase family. EF-G/EF-2 subfamily.

Its subcellular location is the mitochondrion. Mitochondrial GTPase that mediates the disassembly of ribosomes from messenger RNA at the termination of mitochondrial protein biosynthesis. Not involved in the GTP-dependent ribosomal translocation step during translation elongation. This chain is Ribosome-releasing factor 2, mitochondrial, found in Kluyveromyces lactis (strain ATCC 8585 / CBS 2359 / DSM 70799 / NBRC 1267 / NRRL Y-1140 / WM37) (Yeast).